A 122-amino-acid chain; its full sequence is Large ribosomal subunit protein bL12 (122 aa).

It belongs to the bacterial ribosomal protein bL12 family. As to quaternary structure, homodimer. Part of the ribosomal stalk of the 50S ribosomal subunit. Forms a multimeric L10(L12)X complex, where L10 forms an elongated spine to which 2 to 4 L12 dimers bind in a sequential fashion. Binds GTP-bound translation factors.

Forms part of the ribosomal stalk which helps the ribosome interact with GTP-bound translation factors. Is thus essential for accurate translation. The chain is Large ribosomal subunit protein bL12 from Mesoplasma florum (strain ATCC 33453 / NBRC 100688 / NCTC 11704 / L1) (Acholeplasma florum).